The primary structure comprises 66 residues: Protein I177L (66 aa).

Asparagine 11 carries N-linked (GlcNAc...) asparagine; by host glycosylation.

It belongs to the asfivirus I177L family.

Its subcellular location is the virion. This is Protein I177L from Ornithodoros (relapsing fever ticks).